Reading from the N-terminus, the 89-residue chain is MSVTAERKAQIIKEFATAEGDTGSPEVQVAILTERINNLTEHFKDHKKDNHSRRGLLALVSSRRSLLDYLKKKDEARYTKLIGALGIRR.

The protein belongs to the universal ribosomal protein uS15 family. Part of the 30S ribosomal subunit. Forms a bridge to the 50S subunit in the 70S ribosome, contacting the 23S rRNA.

In terms of biological role, one of the primary rRNA binding proteins, it binds directly to 16S rRNA where it helps nucleate assembly of the platform of the 30S subunit by binding and bridging several RNA helices of the 16S rRNA. Forms an intersubunit bridge (bridge B4) with the 23S rRNA of the 50S subunit in the ribosome. In Sinorhizobium medicae (strain WSM419) (Ensifer medicae), this protein is Small ribosomal subunit protein uS15.